A 90-amino-acid polypeptide reads, in one-letter code: ATP synthase subunit e, mitochondrial (90 aa).

N-acetylserine is present on Ser-2. A helical transmembrane segment spans residues 7–23 (VLRWSALGAGVVYGFVH).

In terms of assembly, F-type ATP synthases have 2 components, the catalytic core F(1) and the membrane-embedded component F(0), linked together by a central stalk and a peripheral stalk. The central stalk, also called rotor shaft, is often seen as part of F(1). The peripheral stalk is seen as part of F(0). F(0) contains the membrane channel next to the rotor. F-type ATP synthases form dimers but each monomer functions independently in ATP generation. The dimer consists of 17 different polypeptides: ATP1 (subunit alpha, 3 molecules per monomer, part of F(1)), ATP2 (subunit beta, 3 copies per monomer, part of F(1)), ATP3 (subunit gamma, part of the central stalk), ATP4 (subunit b, part of the peripheral stalk), ATP5/OSCP (subunit 5/OSCP, part of the peripheral stalk), ATP6 (subunit a, part of the peripheral stalk), ATP7 (subunit d, part of the peripheral stalk), ATP8 (subunit 8, part of the peripheral stalk), OLI1 (subunit c, part of the rotor, 10 molecules per monomer), ATP14 (subunit h, part of the peripheral stalk), ATP15 (subunit epsilon, part of the central stalk), ATP16 (subunit delta, part of the central stalk), ATP17 (subunit f, part of the peripheral stalk), ATP18 (subunit i/j, part of the peripheral stalk), ATP19 (subunit k, dimer-specific, at interface between monomers), ATP20 (subunit g, at interface between monomers), TIM11 (subunit e, at interface between monomers).

Its subcellular location is the mitochondrion inner membrane. Mitochondrial membrane ATP synthase (F(1)F(0) ATP synthase or Complex V) produces ATP from ADP in the presence of a proton gradient across the membrane which is generated by electron transport complexes of the respiratory chain. F-type ATP synthases consist of two structural domains, F(1) - containing the extramembraneous catalytic core, and F(0) - containing the membrane proton channel, linked together by a central stalk and a peripheral stalk. During catalysis, ATP synthesis in the catalytic domain of F(1) is coupled via a rotary mechanism of the central stalk subunits to proton translocation. Part of the complex F(0) domain. Minor subunit located with subunit a/ATP6 in the membrane. Together with subunit g/ATP20, probably contributes to membrane curvature at the site of the ATP synthase dimer, ultimately contributing to formation of cristae. This Yarrowia lipolytica (strain CLIB 122 / E 150) (Yeast) protein is ATP synthase subunit e, mitochondrial.